Reading from the N-terminus, the 203-residue chain is Phosphatidylethanolamine N-methyltransferase (203 aa).

It carries out the reaction a 1,2-diacyl-sn-glycero-3-phosphoethanolamine + S-adenosyl-L-methionine = a 1,2-diacyl-sn-glycero-3-phospho-N-methylethanolamine + S-adenosyl-L-homocysteine + H(+). The protein operates within phospholipid metabolism; phosphatidylcholine biosynthesis. Its function is as follows. This enzyme catalyzes three distinct methylation reactions for converting phosphatidylethanolamine to phosphatidylcholine. This chain is Phosphatidylethanolamine N-methyltransferase (pmtA), found in Cereibacter sphaeroides (Rhodobacter sphaeroides).